The primary structure comprises 261 residues: Indole-3-glycerol phosphate synthase (261 aa).

Belongs to the TrpC family.

It catalyses the reaction 1-(2-carboxyphenylamino)-1-deoxy-D-ribulose 5-phosphate + H(+) = (1S,2R)-1-C-(indol-3-yl)glycerol 3-phosphate + CO2 + H2O. It functions in the pathway amino-acid biosynthesis; L-tryptophan biosynthesis; L-tryptophan from chorismate: step 4/5. This is Indole-3-glycerol phosphate synthase from Burkholderia pseudomallei (strain 1106a).